Consider the following 127-residue polypeptide: Protein E7 (127 aa).

Residues 2–56 (VQGPTTHRNLDDSPAGPLLILSPCAGTPTRVPAAPDAPDFRLPCHFGRPTRKRGP) form an E7 terminal domain region. Residues 33-66 (PAAPDAPDFRLPCHFGRPTRKRGPSTPPLSSPGK) are disordered. A zinc finger lies at 82–118 (CGHCGKDLTFAVKTGSTTLLGFEHLLNSDLDLLCPRC). Residues 100–108 (LLGFEHLLN) carry the Nuclear export signal motif.

The protein belongs to the papillomaviridae E7 protein family. As to quaternary structure, homodimer. Homooligomer. Interacts with host RB1; this interaction induces dissociation of RB1-E2F1 complex thereby disrupting RB1 activity. Interacts with host EP300; this interaction represses EP300 transcriptional activity. Interacts with protein E2; this interaction inhibits E7 oncogenic activity. Interacts with host TMEM173/STING; this interaction impairs the ability of TMEM173/STING to sense cytosolic DNA and promote the production of type I interferon (IFN-alpha and IFN-beta). In terms of processing, highly phosphorylated.

The protein resides in the host cytoplasm. The protein localises to the host nucleus. Its function is as follows. Plays a role in viral genome replication by driving entry of quiescent cells into the cell cycle. Stimulation of progression from G1 to S phase allows the virus to efficiently use the cellular DNA replicating machinery to achieve viral genome replication. E7 protein has both transforming and trans-activating activities. Induces the disassembly of the E2F1 transcription factor from RB1, with subsequent transcriptional activation of E2F1-regulated S-phase genes. Interferes with host histone deacetylation mediated by HDAC1 and HDAC2, leading to transcription activation. Also plays a role in the inhibition of both antiviral and antiproliferative functions of host interferon alpha. Interaction with host TMEM173/STING impairs the ability of TMEM173/STING to sense cytosolic DNA and promote the production of type I interferon (IFN-alpha and IFN-beta). In Bos taurus (Bovine), this protein is Protein E7.